The chain runs to 500 residues: Cytochrome P450 monooxygenase ausI (500 aa).

Residues 8 to 28 (LALLGQPLVPGLMVVSAILYL) form a helical membrane-spanning segment. Cys440 is a heme binding site.

The protein belongs to the cytochrome P450 family. Heme is required as a cofactor.

The protein resides in the membrane. Its pathway is secondary metabolite biosynthesis; terpenoid biosynthesis. Cytochrome P450 monooxygenase; part of the gene cluster B that mediates the biosynthesis of the fungal meroterpenoid acetoxydehydroaustin. The first step of the pathway is the synthesis of 3,5-dimethylorsellinic acid by the polyketide synthase ausA. 3,5-dimethylorsellinic acid is then prenylated by the polyprenyl transferase ausN. Further epoxidation by the FAD-dependent monooxygenase ausM and cyclization by the probable terpene cyclase ausL lead to the formation of protoaustinoid A. Protoaustinoid A is then oxidized to spiro-lactone preaustinoid A3 by the combined action of the FAD-binding monooxygenases ausB and ausC, and the dioxygenase ausE. Acid-catalyzed keto-rearrangement and ring contraction of the tetraketide portion of preaustinoid A3 by ausJ lead to the formation of preaustinoid A4. The aldo-keto reductase ausK, with the help of ausH, is involved in the next step by transforming preaustinoid A4 into isoaustinone which is in turn hydroxylated by the P450 monooxygenase ausI to form austinolide. The cytochrome P450 monooxygenase ausG then modifies austinolide to austinol. Austinol is further acetylated to austin by the O-acetyltransferase ausP, which spontaneously changes to dehydroaustin. The cytochrome P450 monooxygenase then converts dehydroaustin is into 7-dehydrodehydroaustin. The hydroxylation catalyzed by ausR permits the second O-acetyltransferase ausQ to add an additional acetyl group to the molecule, leading to the formation of acetoxydehydroaustin. Due to genetic rearrangements of the clusters and the subsequent loss of some enzymes, the end product of the Penicillium brasilianum austinoid biosynthesis clusters is acetoxydehydroaustin. The sequence is that of Cytochrome P450 monooxygenase ausI from Penicillium brasilianum.